The sequence spans 238 residues: LexA repressor (238 aa).

A DNA-binding region (H-T-H motif) is located at residues Phe26–Thr46. Catalysis depends on for autocatalytic cleavage activity residues Ser159 and Lys197.

This sequence belongs to the peptidase S24 family. As to quaternary structure, homodimer.

The enzyme catalyses Hydrolysis of Ala-|-Gly bond in repressor LexA.. Represses a number of genes involved in the response to DNA damage (SOS response), including recA and lexA. In the presence of single-stranded DNA, RecA interacts with LexA causing an autocatalytic cleavage which disrupts the DNA-binding part of LexA, leading to derepression of the SOS regulon and eventually DNA repair. The sequence is that of LexA repressor from Rhodobacter capsulatus (Rhodopseudomonas capsulata).